The primary structure comprises 215 residues: Large ribosomal subunit protein uL3 (215 aa).

Position 156 is an N5-methylglutamine (Gln156).

It belongs to the universal ribosomal protein uL3 family. In terms of assembly, part of the 50S ribosomal subunit. Forms a cluster with proteins L14 and L19. In terms of processing, methylated by PrmB.

Its function is as follows. One of the primary rRNA binding proteins, it binds directly near the 3'-end of the 23S rRNA, where it nucleates assembly of the 50S subunit. The polypeptide is Large ribosomal subunit protein uL3 (Xylella fastidiosa (strain M12)).